We begin with the raw amino-acid sequence, 417 residues long: MAEIKNYSLNFGPQHPAAHGVLRLVLELDGEVVQRADPHIGLLHRATEKLAEHKTFIQSLPYMDRLDYVSMMCNEHAYCLAIEKLLGIDVPLRAQYIRVMFSEITRLLNHLMWLGSHGNDCGSSTILIYTFREREDLFDMYEAVSGARMHAAYFRPGGVYRDLPDSMPQYQASKVRNAKAIEVLNQNRQGSLLDFIDDFTQRFPKCVDEYETLLTDNRIWKQRTVDIGIVTPERALNLGMTGPMLRGSGIAWDLRKKQPYDAYDRVEFDIPVGKTGDCYDRYLVRVQEMRQSNRIIKQCVDWLKANPGPVITDNHKVAPPSRESMKSNMEELIHHFKLFTEGFRVPEGEAYAAVEHPKGEFGIYLVSDGANKPYRLKIRAPGFAHLATLDEMARGHMIADAVAIIGTMDIVFGEIDR.

Belongs to the complex I 49 kDa subunit family. As to quaternary structure, NDH-1 is composed of 14 different subunits. Subunits NuoB, C, D, E, F, and G constitute the peripheral sector of the complex.

Its subcellular location is the cell inner membrane. The enzyme catalyses a quinone + NADH + 5 H(+)(in) = a quinol + NAD(+) + 4 H(+)(out). NDH-1 shuttles electrons from NADH, via FMN and iron-sulfur (Fe-S) centers, to quinones in the respiratory chain. The immediate electron acceptor for the enzyme in this species is believed to be ubiquinone. Couples the redox reaction to proton translocation (for every two electrons transferred, four hydrogen ions are translocated across the cytoplasmic membrane), and thus conserves the redox energy in a proton gradient. This Paracidovorax citrulli (strain AAC00-1) (Acidovorax citrulli) protein is NADH-quinone oxidoreductase subunit D.